Consider the following 630-residue polypeptide: Alpha-1,4-glucan:maltose-1-phosphate maltosyltransferase (630 aa).

Arg-234, Gln-294, and Asp-329 together coordinate alpha-maltose 1-phosphate. Asp-365 acts as the Nucleophile in catalysis. An alpha-maltose 1-phosphate-binding site is contributed by Asn-366. Catalysis depends on Glu-394, which acts as the Proton donor. Residue Lys-504–Tyr-505 coordinates alpha-maltose 1-phosphate.

This sequence belongs to the glycosyl hydrolase 13 family. GlgE subfamily. Homodimer.

It catalyses the reaction alpha-maltose 1-phosphate + [(1-&gt;4)-alpha-D-glucosyl](n) = [(1-&gt;4)-alpha-D-glucosyl](n+2) + phosphate. Functionally, maltosyltransferase that uses maltose 1-phosphate (M1P) as the sugar donor to elongate linear or branched alpha-(1-&gt;4)-glucans. Is involved in a branched alpha-glucan biosynthetic pathway from trehalose, together with TreS, Mak and GlgB. This chain is Alpha-1,4-glucan:maltose-1-phosphate maltosyltransferase, found in Picrophilus torridus (strain ATCC 700027 / DSM 9790 / JCM 10055 / NBRC 100828 / KAW 2/3).